Consider the following 146-residue polypeptide: Acidic phospholipase A2 S13-69J (146 aa).

Residues 1–19 form the signal peptide; it reads MYPAHLLVLLAVCVSLLGA. Residues 20–27 constitute a propeptide that is removed on maturation; it reads ASIPPQPL. 7 disulfide bridges follow: cysteine 38/cysteine 98, cysteine 54/cysteine 145, cysteine 56/cysteine 72, cysteine 71/cysteine 126, cysteine 78/cysteine 119, cysteine 87/cysteine 112, and cysteine 105/cysteine 117. Positions 55, 57, and 59 each coordinate Ca(2+). Residue histidine 75 is part of the active site. Ca(2+) is bound at residue aspartate 76. Aspartate 120 is an active-site residue.

The protein belongs to the phospholipase A2 family. Group I subfamily. D49 sub-subfamily. Ca(2+) is required as a cofactor. As to expression, expressed by the venom gland.

Its subcellular location is the secreted. It carries out the reaction a 1,2-diacyl-sn-glycero-3-phosphocholine + H2O = a 1-acyl-sn-glycero-3-phosphocholine + a fatty acid + H(+). Its function is as follows. Snake venom phospholipase A2 (PLA2) that inhibits collagen-induced platelet aggregation. PLA2 catalyzes the calcium-dependent hydrolysis of the 2-acyl groups in 3-sn-phosphoglycerides. In Austrelaps superbus (Lowland copperhead snake), this protein is Acidic phospholipase A2 S13-69J.